A 265-amino-acid polypeptide reads, in one-letter code: Glutamate racemase 2 (265 aa).

Substrate contacts are provided by residues D7 to S8 and Y39 to G40. Residue C70 is the Proton donor/acceptor of the active site. N71 to T72 provides a ligand contact to substrate. Residue C182 is the Proton donor/acceptor of the active site. Residue T183–H184 coordinates substrate.

The protein belongs to the aspartate/glutamate racemases family.

It catalyses the reaction L-glutamate = D-glutamate. Its pathway is cell wall biogenesis; peptidoglycan biosynthesis. Functionally, provides the (R)-glutamate required for cell wall biosynthesis. The protein is Glutamate racemase 2 (yrpC) of Bacillus subtilis (strain 168).